The sequence spans 192 residues: MAQLFFRYGAMNSGKTIEILKVAHNYEEQDKSVIILTSGLDNRDGVGYVASRIGLKREATPVFDDTNIFEIVKQTNPDAACVLIDEAQFLKKHHVLELADIVDELKIPVMTFGLKNDFRNELFEGSKYLLLYADKIEEMKTICWFCRKKAIMNLRFHDGQPVYEGEQVQIGGNEAYYPVCRHHYFYPPKLTK.

Residues 9–16 (GAMNSGKT) and 85–88 (DEAQ) contribute to the ATP site. E86 acts as the Proton acceptor in catalysis. C143, C146, C180, and H183 together coordinate Zn(2+).

It belongs to the thymidine kinase family. As to quaternary structure, homotetramer.

Its subcellular location is the cytoplasm. The enzyme catalyses thymidine + ATP = dTMP + ADP + H(+). This is Thymidine kinase from Lactiplantibacillus plantarum (strain ATCC BAA-793 / NCIMB 8826 / WCFS1) (Lactobacillus plantarum).